A 262-amino-acid polypeptide reads, in one-letter code: Ribosomal RNA small subunit methyltransferase A (262 aa).

S-adenosyl-L-methionine contacts are provided by His-16, Leu-18, Gly-43, Glu-64, Asp-89, and Asn-109.

The protein belongs to the class I-like SAM-binding methyltransferase superfamily. rRNA adenine N(6)-methyltransferase family. RsmA subfamily.

Its subcellular location is the cytoplasm. The enzyme catalyses adenosine(1518)/adenosine(1519) in 16S rRNA + 4 S-adenosyl-L-methionine = N(6)-dimethyladenosine(1518)/N(6)-dimethyladenosine(1519) in 16S rRNA + 4 S-adenosyl-L-homocysteine + 4 H(+). Functionally, specifically dimethylates two adjacent adenosines (A1518 and A1519) in the loop of a conserved hairpin near the 3'-end of 16S rRNA in the 30S particle. May play a critical role in biogenesis of 30S subunits. This is Ribosomal RNA small subunit methyltransferase A from Xanthomonas oryzae pv. oryzae (strain MAFF 311018).